The chain runs to 316 residues: Acetaldehyde dehydrogenase (316 aa).

13–16 contacts NAD(+); it reads SGNI. C131 (acyl-thioester intermediate) is an active-site residue. NAD(+) is bound by residues 162 to 170 and N290; that span reads SAGPGTRAN.

The protein belongs to the acetaldehyde dehydrogenase family.

The enzyme catalyses acetaldehyde + NAD(+) + CoA = acetyl-CoA + NADH + H(+). In terms of biological role, catalyzes the conversion of acetaldehyde to acetyl-CoA, using NAD(+) and coenzyme A. Is the final enzyme in the meta-cleavage pathway for the degradation of 2-aminophenol. This chain is Acetaldehyde dehydrogenase (amnH), found in Pseudomonas sp.